The following is a 376-amino-acid chain: 12-oxophytodienoate reductase 1 (376 aa).

Residues Pro-35–Thr-37, Ala-68, and Gln-110 each bind FMN. Residues Ser-143 and His-187–His-190 each bind substrate. Catalysis depends on Tyr-192, which acts as the Proton donor. Position 239 (Arg-239) interacts with FMN. Arg-279 is a binding site for substrate. FMN is bound by residues Gly-309 and Gly-330–Arg-331.

It belongs to the NADH:flavin oxidoreductase/NADH oxidase family. It depends on FMN as a cofactor. As to expression, constitutively expressed in roots, leaves, cotyledons, cells culture and to a lower extent in flowers.

The protein localises to the cytoplasm. It carries out the reaction (1S,2S)-OPC-8 + NADP(+) = (9S,13S,15Z)-12-oxophyto-10,15-dienoate + NADPH + H(+). Its pathway is lipid metabolism; oxylipin biosynthesis. In terms of biological role, specifically cleaves olefinic bonds in alpha,beta-unsaturated carbonyls and may be involved in detoxification or modification of these reactive compounds. May be involved in the biosynthesis or metabolism of oxylipin signaling molecules. In vitro, reduces 9R,13R-12-oxophyodienoic acid (9R,13R-OPDA) to 9R,13R-OPC-8:0, but not 9S,13S-OPDA, the natural precursor of jasmonic acid. Also reduces N-ethylmaleimide and maleic acid. This is 12-oxophytodienoate reductase 1 (OPR1) from Solanum lycopersicum (Tomato).